The primary structure comprises 455 residues: Probable pectate lyase 6 (455 aa).

The signal sequence occupies residues 1–25 (MVNLGSYVFVFVALSLTVVVPSVQA). 2 N-linked (GlcNAc...) asparagine glycosylation sites follow: Asn-55 and Asn-75. Asp-247, Asp-271, and Asp-275 together coordinate Ca(2+). Arg-327 is an active-site residue.

Belongs to the polysaccharide lyase 1 family. Ca(2+) is required as a cofactor.

The enzyme catalyses Eliminative cleavage of (1-&gt;4)-alpha-D-galacturonan to give oligosaccharides with 4-deoxy-alpha-D-galact-4-enuronosyl groups at their non-reducing ends.. It participates in glycan metabolism; pectin degradation; 2-dehydro-3-deoxy-D-gluconate from pectin: step 2/5. In Arabidopsis thaliana (Mouse-ear cress), this protein is Probable pectate lyase 6.